The sequence spans 65 residues: Small ribosomal subunit protein eS17 (65 aa).

This sequence belongs to the eukaryotic ribosomal protein eS17 family.

This chain is Small ribosomal subunit protein eS17, found in Methanocella arvoryzae (strain DSM 22066 / NBRC 105507 / MRE50).